A 316-amino-acid chain; its full sequence is Homoserine kinase (316 aa).

Belongs to the pseudomonas-type ThrB family.

It carries out the reaction L-homoserine + ATP = O-phospho-L-homoserine + ADP + H(+). The protein operates within amino-acid biosynthesis; L-threonine biosynthesis; L-threonine from L-aspartate: step 4/5. In Pseudomonas aeruginosa (strain LESB58), this protein is Homoserine kinase.